The chain runs to 267 residues: Putative carbamate hydrolase RutD (267 aa).

Positions 14–115 (PTLVLSAGLG…EKLVVVNGWP (102 aa)) constitute an AB hydrolase-1 domain.

The protein belongs to the AB hydrolase superfamily. Hydrolase RutD family.

The enzyme catalyses carbamate + 2 H(+) = NH4(+) + CO2. In terms of biological role, involved in pyrimidine catabolism. May facilitate the hydrolysis of carbamate, a reaction that can also occur spontaneously. The protein is Putative carbamate hydrolase RutD of Serratia proteamaculans (strain 568).